The sequence spans 162 residues: Nucleotide-binding protein CMM_2802 (162 aa).

This sequence belongs to the YajQ family.

Its function is as follows. Nucleotide-binding protein. In Clavibacter michiganensis subsp. michiganensis (strain NCPPB 382), this protein is Nucleotide-binding protein CMM_2802.